A 153-amino-acid chain; its full sequence is Ribosome maturation factor RimP (153 aa).

Belongs to the RimP family.

The protein localises to the cytoplasm. Required for maturation of 30S ribosomal subunits. The sequence is that of Ribosome maturation factor RimP from Clostridioides difficile (strain 630) (Peptoclostridium difficile).